A 342-amino-acid polypeptide reads, in one-letter code: Oxygen-dependent coproporphyrinogen-III oxidase (342 aa).

Residue S98 coordinates substrate. Residues H102 and H112 each coordinate a divalent metal cation. The Proton donor role is filled by H112. 114-116 (NYR) contributes to the substrate binding site. Positions 146 and 176 each coordinate a divalent metal cation. Residues 266-301 (YVEFNLVWDRGTIFGLQTNGRTESILMSLPPLARWE) are important for dimerization.

This sequence belongs to the aerobic coproporphyrinogen-III oxidase family. In terms of assembly, homodimer. The cofactor is a divalent metal cation.

It localises to the cytoplasm. The catalysed reaction is coproporphyrinogen III + O2 + 2 H(+) = protoporphyrinogen IX + 2 CO2 + 2 H2O. It participates in porphyrin-containing compound metabolism; protoporphyrin-IX biosynthesis; protoporphyrinogen-IX from coproporphyrinogen-III (O2 route): step 1/1. Functionally, involved in the heme and chlorophyll biosynthesis. Catalyzes the aerobic oxidative decarboxylation of propionate groups of rings A and B of coproporphyrinogen-III to yield the vinyl groups in protoporphyrinogen-IX. The protein is Oxygen-dependent coproporphyrinogen-III oxidase of Prochlorococcus marinus subsp. pastoris (strain CCMP1986 / NIES-2087 / MED4).